Reading from the N-terminus, the 312-residue chain is Glyoxylate/hydroxypyruvate reductase A (312 aa).

The active site involves Arg227. The Proton donor role is filled by His275.

The protein belongs to the D-isomer specific 2-hydroxyacid dehydrogenase family. GhrA subfamily.

The protein resides in the cytoplasm. The catalysed reaction is glycolate + NADP(+) = glyoxylate + NADPH + H(+). The enzyme catalyses (R)-glycerate + NAD(+) = 3-hydroxypyruvate + NADH + H(+). It catalyses the reaction (R)-glycerate + NADP(+) = 3-hydroxypyruvate + NADPH + H(+). Functionally, catalyzes the NADPH-dependent reduction of glyoxylate and hydroxypyruvate into glycolate and glycerate, respectively. This chain is Glyoxylate/hydroxypyruvate reductase A, found in Salmonella paratyphi B (strain ATCC BAA-1250 / SPB7).